A 122-amino-acid chain; its full sequence is UPF0231 protein VF_2154 (122 aa).

It belongs to the UPF0231 family.

In Aliivibrio fischeri (strain ATCC 700601 / ES114) (Vibrio fischeri), this protein is UPF0231 protein VF_2154.